Reading from the N-terminus, the 184-residue chain is Vacuolar protein sorting-associated protein 68 (184 aa).

Met1 bears the N-acetylmethionine mark. Ser8 is subject to Phosphoserine. The helical transmembrane segment at 26–46 threads the bilayer; that stretch reads GVYLSGALYALGFWIFLDAVL. Asn52 carries N-linked (GlcNAc...) asparagine glycosylation. 3 helical membrane passes run 56–76, 115–135, and 150–170; these read VHVT…TLIV, LFFG…VLII, and MGVN…VLWI.

The protein belongs to the UPF0220 family.

It is found in the vacuole membrane. Its subcellular location is the mitochondrion. Involved in vacuolar protein sorting. The polypeptide is Vacuolar protein sorting-associated protein 68 (VPS68) (Saccharomyces cerevisiae (strain ATCC 204508 / S288c) (Baker's yeast)).